A 317-amino-acid chain; its full sequence is MRDMMIQSKKIALIGSGNIGGMIAYLIRLKNLGDVVLLDINDGMAKGKALDIAESSPIGKYNGEIFGTNNYADIENADAIIVTAGITRKPGMSRDDLISTNVNIIKEIATNIAKYAPNAFVIVVTNPLDVMVLAMYRYSHLPSNMIVGMAGVLDSARFSYFIAKELNVSVESVDSLVLGGHGDIMLPLIRYSSVSGVSIADLIKLGMITHDKVTEIVERTRKGGEEIVSLLKTGSAYYAPAESAVLMLDSYLNDKKLMLPCSAYLKGEYGVHDLFVGVPIIIGKNGVEKIVELQLTEEENSIFNNSVALIQNLVANI.

NAD(+)-binding positions include 15–20 (GSGNIG) and Asp-39. Substrate contacts are provided by Arg-88 and Arg-94. Residues Asn-101 and 124–126 (VTN) contribute to the NAD(+) site. Residues Asn-126 and Arg-157 each coordinate substrate. The active-site Proton acceptor is the His-181.

This sequence belongs to the LDH/MDH superfamily. MDH type 3 family.

The catalysed reaction is (S)-malate + NAD(+) = oxaloacetate + NADH + H(+). In terms of biological role, catalyzes the reversible oxidation of malate to oxaloacetate. In Ehrlichia ruminantium (strain Gardel), this protein is Malate dehydrogenase.